We begin with the raw amino-acid sequence, 378 residues long: MASKPEKRVASSVFITLVPPRRDEAVVEEVRRAACEAWPGRPWESAPTKAPGAGSVGKLRSWMPPGRAAAPGPAVPPQLSNGGCSLPPPPLDVDDALPDLDLLPPPPPPPAADLPPPDEEPHSAMGASLISDLEQLHLPPPPPPPQALVEGPPLQPRPSHLKPAEEELPPPPEEPVSFPEREASTDICAFCHKTVSPRELAVEAMKRQYHAQCFTCRVCRRQLAGQSFYQKDGRPLCEPCYQDTLEKCGKCGEVVREHIIRALGQAFHPSCFTCVTCARRIGDESFALDSQNEVYCLDDFYRKFAPVCSICENPIIPRDGKDAFKIECMGRNFHENCYRCEDCRVLLSVEPTDQGCYPLNNRLFCKPCHVKRSAAGCC.

The interval 1–69 (MASKPEKRVA…RSWMPPGRAA (69 aa)) is filamin-binding. A disordered region spans residues 38 to 179 (WPGRPWESAP…PPPEEPVSFP (142 aa)). Positions 103–115 (LPPPPPPPAADLP) are enriched in pro residues. LIM zinc-binding domains are found at residues 186 to 247 (DICA…TLEK), 248 to 305 (CGKC…RKFA), and 306 to 375 (PVCS…RSAA). The PLEKHC1-binding stretch occupies residues 281-378 (IGDESFALDS…HVKRSAAGCC (98 aa)).

In terms of assembly, interacts with PLEKHC1, FLNA, FLNB and FLNC. Interacts with NKX2-5.

The protein resides in the cell junction. The protein localises to the focal adhesion. It is found in the cytoplasm. It localises to the cytoskeleton. Its subcellular location is the stress fiber. Functionally, serves as an anchoring site for cell-ECM adhesion proteins and filamin-containing actin filaments. Is implicated in cell shape modulation (spreading) and motility. May participate in the regulation of filamin-mediated cross-linking and stabilization of actin filaments. May also regulate the assembly of filamin-containing signaling complexes that control actin assembly. Promotes dissociation of FLNA from ITGB3 and ITGB7. Promotes activation of integrins and regulates integrin-mediated cell-cell adhesion. This is Filamin-binding LIM protein 1 (FBLIM1) from Bos taurus (Bovine).